We begin with the raw amino-acid sequence, 182 residues long: Hypoxanthine/guanine phosphoribosyltransferase (182 aa).

Belongs to the purine/pyrimidine phosphoribosyltransferase family. Archaeal HPRT subfamily. In terms of assembly, homodimer.

The protein localises to the cytoplasm. The catalysed reaction is IMP + diphosphate = hypoxanthine + 5-phospho-alpha-D-ribose 1-diphosphate. It carries out the reaction GMP + diphosphate = guanine + 5-phospho-alpha-D-ribose 1-diphosphate. Its pathway is purine metabolism; IMP biosynthesis via salvage pathway; IMP from hypoxanthine: step 1/1. Functionally, catalyzes a salvage reaction resulting in the formation of IMP that is energically less costly than de novo synthesis. The protein is Hypoxanthine/guanine phosphoribosyltransferase of Methanospirillum hungatei JF-1 (strain ATCC 27890 / DSM 864 / NBRC 100397 / JF-1).